The chain runs to 212 residues: Thymidylate kinase (212 aa).

11–18 (GPEGAGKT) lines the ATP pocket.

The protein belongs to the thymidylate kinase family.

The catalysed reaction is dTMP + ATP = dTDP + ADP. In terms of biological role, phosphorylation of dTMP to form dTDP in both de novo and salvage pathways of dTTP synthesis. The chain is Thymidylate kinase from Streptococcus pneumoniae (strain CGSP14).